We begin with the raw amino-acid sequence, 621 residues long: tRNA uridine 5-carboxymethylaminomethyl modification enzyme MnmG (621 aa).

11–16 (GGGHAG) serves as a coordination point for FAD. 270 to 284 (GPRYCPSIEDKINRF) is a binding site for NAD(+).

It belongs to the MnmG family. Homodimer. Heterotetramer of two MnmE and two MnmG subunits. It depends on FAD as a cofactor.

It localises to the cytoplasm. In terms of biological role, NAD-binding protein involved in the addition of a carboxymethylaminomethyl (cmnm) group at the wobble position (U34) of certain tRNAs, forming tRNA-cmnm(5)s(2)U34. The polypeptide is tRNA uridine 5-carboxymethylaminomethyl modification enzyme MnmG (Helicobacter pylori (strain Shi470)).